We begin with the raw amino-acid sequence, 212 residues long: Octanoyltransferase (212 aa).

The BPL/LPL catalytic domain maps to 33–212 (GTAPELVWLL…ATFPEVFGAD (180 aa)). Residues 72-79 (RGGQYTYH), 144-146 (AIG), and 157-159 (GIA) contribute to the substrate site. Cys-175 serves as the catalytic Acyl-thioester intermediate.

The protein belongs to the LipB family.

The protein localises to the cytoplasm. It carries out the reaction octanoyl-[ACP] + L-lysyl-[protein] = N(6)-octanoyl-L-lysyl-[protein] + holo-[ACP] + H(+). The protein operates within protein modification; protein lipoylation via endogenous pathway; protein N(6)-(lipoyl)lysine from octanoyl-[acyl-carrier-protein]: step 1/2. Functionally, catalyzes the transfer of endogenously produced octanoic acid from octanoyl-acyl-carrier-protein onto the lipoyl domains of lipoate-dependent enzymes. Lipoyl-ACP can also act as a substrate although octanoyl-ACP is likely to be the physiological substrate. This chain is Octanoyltransferase, found in Paramagnetospirillum magneticum (strain ATCC 700264 / AMB-1) (Magnetospirillum magneticum).